We begin with the raw amino-acid sequence, 65 residues long: Large ribosomal subunit protein bL35 (65 aa).

The protein belongs to the bacterial ribosomal protein bL35 family.

The protein is Large ribosomal subunit protein bL35 of Paraburkholderia xenovorans (strain LB400).